The chain runs to 930 residues: Isoleucine--tRNA ligase (930 aa).

A 'HIGH' region motif is present at residues 57–67 (PYANGNIHVGH). Glutamate 554 is a binding site for L-isoleucyl-5'-AMP. The 'KMSKS' region motif lies at 595-599 (KMSKS). Residue lysine 598 participates in ATP binding.

This sequence belongs to the class-I aminoacyl-tRNA synthetase family. IleS type 1 subfamily. As to quaternary structure, monomer.

It is found in the cytoplasm. The catalysed reaction is tRNA(Ile) + L-isoleucine + ATP = L-isoleucyl-tRNA(Ile) + AMP + diphosphate. In terms of biological role, catalyzes the attachment of isoleucine to tRNA(Ile). As IleRS can inadvertently accommodate and process structurally similar amino acids such as valine, to avoid such errors it has two additional distinct tRNA(Ile)-dependent editing activities. One activity is designated as 'pretransfer' editing and involves the hydrolysis of activated Val-AMP. The other activity is designated 'posttransfer' editing and involves deacylation of mischarged Val-tRNA(Ile). The protein is Isoleucine--tRNA ligase of Streptococcus agalactiae serotype III (strain NEM316).